A 52-amino-acid polypeptide reads, in one-letter code: Teratocyte protein CftICK-I (52 aa).

The first 19 residues, 1–19 (MYKLCILFLVVIFAVMAIA), serve as a signal peptide directing secretion. Cystine bridges form between C22-C37, C29-C41, and C36-C51.

As to expression, abundantly expressed by teratocytes, which are extra-embryonic cells released by parasitoid wasps into their hosts during larval eclosion.

It localises to the secreted. This endoparasitoid wasp peptide has immununosuppressive, antimicrobial and insecticidal activities. Suppress cellular immunity which is detectable as a reduction of hemocyte encapsulation in the host. Shows potent antifungal activity against C.albicans (MIC~0.25 ug/ml). In vivo, ingestion of this peptide (probably at excessive doses) increases larval mortality and reduces leaf consumption of D.saccharalis, a permissive host for C.flavipes. This chain is Teratocyte protein CftICK-I, found in Cotesia flavipes (Parasitic wasp).